Consider the following 327-residue polypeptide: Beta-ketoacyl-[acyl-carrier-protein] synthase III (327 aa).

Catalysis depends on residues Cys-114 and His-254. The segment at 255–259 is ACP-binding; the sequence is QANRR. Asn-284 is an active-site residue.

The protein belongs to the thiolase-like superfamily. FabH family. As to quaternary structure, homodimer.

It is found in the cytoplasm. It carries out the reaction malonyl-[ACP] + acetyl-CoA + H(+) = 3-oxobutanoyl-[ACP] + CO2 + CoA. Its pathway is lipid metabolism; fatty acid biosynthesis. Functionally, catalyzes the condensation reaction of fatty acid synthesis by the addition to an acyl acceptor of two carbons from malonyl-ACP. Catalyzes the first condensation reaction which initiates fatty acid synthesis and may therefore play a role in governing the total rate of fatty acid production. Possesses both acetoacetyl-ACP synthase and acetyl transacylase activities. Its substrate specificity determines the biosynthesis of branched-chain and/or straight-chain of fatty acids. The sequence is that of Beta-ketoacyl-[acyl-carrier-protein] synthase III from Lactobacillus helveticus (strain DPC 4571).